Here is a 433-residue protein sequence, read N- to C-terminus: 23S rRNA (uracil(1939)-C(5))-methyltransferase RlmD (433 aa).

Positions Arg-10–Arg-68 constitute a TRAM domain. The [4Fe-4S] cluster site is built by Cys-81, Cys-87, Cys-90, and Cys-162. Gln-265, Phe-294, Asn-299, Glu-315, Asn-342, and Asp-363 together coordinate S-adenosyl-L-methionine. Cys-389 acts as the Nucleophile in catalysis.

Belongs to the class I-like SAM-binding methyltransferase superfamily. RNA M5U methyltransferase family. RlmD subfamily.

The catalysed reaction is uridine(1939) in 23S rRNA + S-adenosyl-L-methionine = 5-methyluridine(1939) in 23S rRNA + S-adenosyl-L-homocysteine + H(+). Functionally, catalyzes the formation of 5-methyl-uridine at position 1939 (m5U1939) in 23S rRNA. The protein is 23S rRNA (uracil(1939)-C(5))-methyltransferase RlmD of Escherichia coli O157:H7.